The primary structure comprises 131 residues: Profilin-5 (131 aa).

An intrachain disulfide couples C13 to C115. The short motif at 81 to 97 (AVIRGKKGAGGITVKKT) is the Involved in PIP2 interaction element. T111 is subject to Phosphothreonine.

The protein belongs to the profilin family. In terms of assembly, occurs in many kinds of cells as a complex with monomeric actin in a 1:1 ratio. Post-translationally, phosphorylated by MAP kinases.

It is found in the cytoplasm. The protein localises to the cytoskeleton. Its function is as follows. Binds to actin and affects the structure of the cytoskeleton. At high concentrations, profilin prevents the polymerization of actin, whereas it enhances it at low concentrations. In Corylus avellana (European hazel), this protein is Profilin-5.